A 600-amino-acid chain; its full sequence is Sulfite reductase [NADPH] flavoprotein alpha-component (600 aa).

A Flavodoxin-like domain is found at Ile-63–Thr-201. FMN-binding positions include Ser-69–Ala-74, Ser-116–Gly-119, and Leu-152–Cys-161. The FAD-binding FR-type domain occupies Gln-235–Pro-449. FAD contacts are provided by residues Thr-323, His-357, Arg-387–Ser-390, Thr-405–Gly-407, Tyr-411, and Gly-420–Ser-423. NADP(+)-binding positions include Ser-520–Arg-521, Lys-526–Gln-530, and Asp-562. Residue Tyr-600 participates in FAD binding.

It belongs to the NADPH-dependent sulphite reductase flavoprotein subunit CysJ family. This sequence in the N-terminal section; belongs to the flavodoxin family. The protein in the C-terminal section; belongs to the flavoprotein pyridine nucleotide cytochrome reductase family. Alpha(8)-beta(8). The alpha component is a flavoprotein, the beta component is a hemoprotein. The cofactor is FAD. FMN is required as a cofactor.

It catalyses the reaction hydrogen sulfide + 3 NADP(+) + 3 H2O = sulfite + 3 NADPH + 4 H(+). Its pathway is sulfur metabolism; hydrogen sulfide biosynthesis; hydrogen sulfide from sulfite (NADPH route): step 1/1. Its function is as follows. Component of the sulfite reductase complex that catalyzes the 6-electron reduction of sulfite to sulfide. This is one of several activities required for the biosynthesis of L-cysteine from sulfate. The flavoprotein component catalyzes the electron flow from NADPH -&gt; FAD -&gt; FMN to the hemoprotein component. This Photorhabdus laumondii subsp. laumondii (strain DSM 15139 / CIP 105565 / TT01) (Photorhabdus luminescens subsp. laumondii) protein is Sulfite reductase [NADPH] flavoprotein alpha-component.